We begin with the raw amino-acid sequence, 398 residues long: Phosphoglycerate kinase (398 aa).

Substrate-binding positions include 23-25 (DFN), arginine 38, 61-64 (HMGK), arginine 122, and arginine 155. ATP-binding positions include lysine 206, glycine 297, glutamate 328, and 354–357 (GGDS).

The protein belongs to the phosphoglycerate kinase family. In terms of assembly, monomer.

Its subcellular location is the cytoplasm. The enzyme catalyses (2R)-3-phosphoglycerate + ATP = (2R)-3-phospho-glyceroyl phosphate + ADP. The protein operates within carbohydrate degradation; glycolysis; pyruvate from D-glyceraldehyde 3-phosphate: step 2/5. This chain is Phosphoglycerate kinase, found in Clostridium botulinum (strain Langeland / NCTC 10281 / Type F).